Here is a 510-residue protein sequence, read N- to C-terminus: Cytochrome P450 94B1 (510 aa).

Residues 3–23 form a helical membrane-spanning segment; the sequence is MLNAIILILFPIIGFVLIFSF. Position 450 (Cys-450) interacts with heme.

Belongs to the cytochrome P450 family. It depends on heme as a cofactor.

It localises to the membrane. It carries out the reaction a jasmonyl-L-amino acid + reduced [NADPH--hemoprotein reductase] + O2 = a 12-hydroxyjasmonyl-L-alpha-amino acid + oxidized [NADPH--hemoprotein reductase] + H2O + H(+). Its function is as follows. Hydroxylase involved in the oxidation of the plant hormone jasmonoyl-L-isoleucine (JA-Ile), a bioactive phytohormone of the jasmonate-mediated signaling pathway. Converts JA-Ile to 12-hydroxy-JA-Ile. The chain is Cytochrome P450 94B1 from Arabidopsis thaliana (Mouse-ear cress).